The primary structure comprises 295 residues: Phosphoserine phosphatase, chloroplastic (295 aa).

A chloroplast-targeting transit peptide spans 1–54 (MEALTTSRVVPVQVPCRKLSSLFANFSCLELRRYPCRGLVSIMNHPKLLRPVTA). The active-site Nucleophile is Asp89. Residues Asp89 and Asp91 each contribute to the Mg(2+) site. Asp91 functions as the Proton donor in the catalytic mechanism. Residues Glu98, Arg134, 178 to 179 (SG), and Lys227 contribute to the substrate site. Asp248 serves as a coordination point for Mg(2+).

Belongs to the HAD-like hydrolase superfamily. SerB family. The cofactor is Mg(2+). In terms of tissue distribution, ubiquitous. Mainly expressed in shoot and root meristems, vasculature, pollen, anthers, carpels and seeds.

Its subcellular location is the plastid. It is found in the chloroplast. The enzyme catalyses O-phospho-L-serine + H2O = L-serine + phosphate. It carries out the reaction O-phospho-D-serine + H2O = D-serine + phosphate. The protein operates within amino-acid biosynthesis; L-serine biosynthesis; L-serine from 3-phospho-D-glycerate: step 3/3. Its activity is regulated as follows. Approximately 60% inhibition of PSP activity is observed in presence of 10 mM serine. Functionally, catalyzes the last step in the plastidial phosphorylated pathway of serine biosynthesis (PPSB). The reaction mechanism proceeds via the formation of a phosphoryl-enzyme intermediates. Required for embryo, pollen and root development. May be required preferentially for serine biosynthesis in non-photosynthetic tissues. This chain is Phosphoserine phosphatase, chloroplastic (PSP), found in Arabidopsis thaliana (Mouse-ear cress).